Here is a 355-residue protein sequence, read N- to C-terminus: dTDP-D-glucose 4,6-dehydratase (355 aa).

Residue Thr142 coordinates substrate. The active-site Proton donor is Asp143. Active-site proton acceptor residues include Glu144 and Tyr166.

Belongs to the NAD(P)-dependent epimerase/dehydratase family. dTDP-glucose dehydratase subfamily. NAD(+) serves as cofactor.

It carries out the reaction dTDP-alpha-D-glucose = dTDP-4-dehydro-6-deoxy-alpha-D-glucose + H2O. In Bos taurus (Bovine), this protein is dTDP-D-glucose 4,6-dehydratase (TGDS).